The sequence spans 149 residues: Oligosaccharyltransferase complex subunit OSTC (149 aa).

Over 1-32 (METLYRVPFLVLECPNLKLKKPPWLHMPSAMT) the chain is Cytoplasmic. The helical transmembrane segment at 33 to 53 (VYALVVVSYFLITGGIIYDVI) threads the bilayer. At 54 to 83 (VEPPSVGSMTDEHGHQRPVAFLAYRVNGQY) the chain is on the extracellular side. A helical membrane pass occupies residues 84–104 (IMEGLASSFLFTMGGLGFIIL). Residues 105–117 (DRSNAPNIPKLNR) lie on the Cytoplasmic side of the membrane. A helical transmembrane segment spans residues 118 to 138 (FLLLFIGFVCVLLSFFMARVF). The Extracellular segment spans residues 139–149 (MRMKLPGYLMG).

The protein belongs to the OSTC family. As to quaternary structure, component of STT3A-containing oligosaccharyl transferase (OST-A) complex. STT3A-containing complex assembly occurs through the formation of 3 subcomplexes. Subcomplex 1 contains RPN1 and TMEM258, subcomplex 2 contains the STT3A-specific subunits STT3A, DC2/OSTC, and KCP2 as well as the core subunit OST4, and subcomplex 3 contains RPN2, DAD1, and OST48. The OST-A complex can form stable complexes with the Sec61 complex or with both the Sec61 and TRAP complexes. Interacts with PSEN1 and NCSTN; indicative for an association with the gamma-secretase complex.

It is found in the endoplasmic reticulum. The protein resides in the membrane. It functions in the pathway protein modification; protein glycosylation. Its function is as follows. Subunit of STT3A-containing oligosaccharyl transferase (OST-A) complex that catalyzes the initial transfer of a defined glycan (Glc(3)Man(9)GlcNAc(2) in eukaryotes) from the lipid carrier dolichol-pyrophosphate to an asparagine residue within an Asn-X-Ser/Thr consensus motif in nascent polypeptide chains, the first step in protein N-glycosylation. N-glycosylation occurs cotranslationally and the complex associates with the Sec61 complex at the channel-forming translocon complex that mediates protein translocation across the endoplasmic reticulum (ER). Within the OST-A complex, acts as an adapter that anchors the OST-A complex to the Sec61 complex. May be involved in N-glycosylation of APP (amyloid-beta precursor protein). Can modulate gamma-secretase cleavage of APP by enhancing endoprotelysis of PSEN1. The polypeptide is Oligosaccharyltransferase complex subunit OSTC (Homo sapiens (Human)).